A 360-amino-acid polypeptide reads, in one-letter code: Chorismate synthase (360 aa).

An NADP(+)-binding site is contributed by Arg-48. FMN-binding positions include 125–127, 242–243, Gly-286, 301–305, and Arg-327; these read RSS, NA, and KPTSS.

This sequence belongs to the chorismate synthase family. As to quaternary structure, homotetramer. The cofactor is FMNH2.

It carries out the reaction 5-O-(1-carboxyvinyl)-3-phosphoshikimate = chorismate + phosphate. It participates in metabolic intermediate biosynthesis; chorismate biosynthesis; chorismate from D-erythrose 4-phosphate and phosphoenolpyruvate: step 7/7. In terms of biological role, catalyzes the anti-1,4-elimination of the C-3 phosphate and the C-6 proR hydrogen from 5-enolpyruvylshikimate-3-phosphate (EPSP) to yield chorismate, which is the branch point compound that serves as the starting substrate for the three terminal pathways of aromatic amino acid biosynthesis. This reaction introduces a second double bond into the aromatic ring system. This Pelagibacter ubique (strain HTCC1062) protein is Chorismate synthase.